The chain runs to 487 residues: Cyclic AMP-dependent transcription factor ATF-2 (487 aa).

A C2H2-type zinc finger spans residues 7–31 (FLCTAPGCGQRFTNEDHLAVHKHKH). Disordered stretches follow at residues 106–132 (EEPS…DEKE) and 267–354 (QHPQ…CRQK). The segment covering 298 to 319 (QQPATSTTETPASPAQPTQQTP) has biased composition (low complexity). Residues 328-345 (AANEDPDEKRRKFLERNR) show a composition bias toward basic and acidic residues. The 64-residue stretch at 334 to 397 (DEKRRKFLER…AQLKQLLLAH (64 aa)) folds into the bZIP domain. A basic motif region spans residues 336 to 356 (KRRKFLERNRAAASRCRQKRK). The segment at 362–390 (LEKKAEDLSSLNGQLQNEVTLLRNEVAQL) is leucine-zipper. Positions 387-396 (VAQLKQLLLA) match the Nuclear export signal motif. Residues 407 to 487 (KKSGYHTADK…PPSQAQPSGS (81 aa)) are disordered. Over residues 425–436 (VPSSPHTEAIQH) the composition is skewed to polar residues. Low complexity predominate over residues 437-449 (SSVSTSNGVSSTS). The span at 457–468 (SVLTQLADQSSE) shows a compositional bias: polar residues.

Belongs to the bZIP family. ATF subfamily. In terms of assembly, binds DNA as a dimer and can form a homodimer in the absence of DNA. Can form a heterodimer with JUN. Heterodimerization is essential for its transcriptional activity.

It localises to the nucleus. Its subcellular location is the cytoplasm. The protein localises to the mitochondrion outer membrane. In terms of biological role, transcriptional activator which regulates the transcription of various genes, including those involved in anti-apoptosis, cell growth, and DNA damage response. Dependent on its binding partner, binds to CRE (cAMP response element) consensus sequences (5'-TGACGTCA-3') or to AP-1 (activator protein 1) consensus sequences (5'-TGACTCA-3'). In Gallus gallus (Chicken), this protein is Cyclic AMP-dependent transcription factor ATF-2 (ATF2).